We begin with the raw amino-acid sequence, 575 residues long: Cyclic nucleotide-gated channel alpha-4 (575 aa).

The Cytoplasmic portion of the chain corresponds to M1–L38. A helical membrane pass occupies residues N39–D60. Over L61 to F70 the chain is Extracellular. Residues V71–G91 form a helical membrane-spanning segment. The Cytoplasmic portion of the chain corresponds to F92–L116. A helical transmembrane segment spans residues L117–H135. The Extracellular portion of the chain corresponds to I136–R140. A helical membrane pass occupies residues L141–T159. Topologically, residues R160–A166 are cytoplasmic. The tract at residues P164–M272 is ion conduction pathway. A helical membrane pass occupies residues F167–L190. Over S191–R213 the chain is Extracellular. 2 consecutive transmembrane segments (helical) span residues L214–V248 and G249–N273. A selectivity filter region spans residues T231–D234. Residues T274 to Q350 are C-linker. Residues T274 to E575 are Cytoplasmic-facing. The short motif at L292–R302 is the IQ-type element. I348–I471 serves as a coordination point for a nucleoside 3',5'-cyclic phosphate. Residues A354 to K474 are cyclic nucleotide-binding domain. Residues G414, S417, R430, and T431 each coordinate 3',5'-cyclic GMP. 3',5'-cyclic AMP-binding residues include R430 and T431. The stretch at T493–E547 forms a coiled coil. A disordered region spans residues R537–E575. The span at D544–P554 shows a compositional bias: acidic residues.

This sequence belongs to the cyclic nucleotide-gated cation channel (TC 1.A.1.5) family. CNGA4 subfamily. In terms of assembly, the olfactory cyclic nucleotide-gated channel is an heterotetramer composed of CNGA2, CNGA4 and CNGB1b subunits with 2:1:1 stoichiometry. May form homomeric channels gated by nitric oxide. N-glycosylated. Olfactory neurons. Expressed in olfactory sensory cilia (at protein level).

It localises to the cell projection. Its subcellular location is the cilium membrane. The enzyme catalyses Ca(2+)(in) = Ca(2+)(out). The catalysed reaction is Na(+)(in) = Na(+)(out). It catalyses the reaction K(+)(in) = K(+)(out). It carries out the reaction NH4(+)(in) = NH4(+)(out). The enzyme catalyses Rb(+)(in) = Rb(+)(out). The catalysed reaction is Li(+)(in) = Li(+)(out). It catalyses the reaction Cs(+)(in) = Cs(+)(out). With respect to regulation, ca(2+)-calmodulin exerts its inhibitory effect in cAMP sensitivity by binding to IQ-like motif of CNGA4 and preferably binds to the channel in the closed state. Inhibition by PIP3 of the CNG channel probably occurs via CGNA2 binding. Ca(2+) currents are inhibited by pimozide, an L-type Ca(2+) channel blocker. Pore-forming subunit of the olfactory cyclic nucleotide-gated channel. Operates in the cilia of olfactory sensory neurons where chemical stimulation of the odorant is converted to an electrical signal. Mediates odorant-induced cAMP-dependent Ca(2+) influx triggering neuron depolarization. The rise of intracellular Ca(2+) levels potentiates the olfactory response by activating Ca(2+)-dependent Cl(-) channels, but it also serves as a negative feedback signal to desensitize the channel for rapid adaptation to odorants. Conducts cAMP- and cGMP-gated ion currents, with permeability for monovalent and divalent cations. May conduct nitric oxide-gated Ca(2+) currents relevant to neurons of vomeronasal organ, a system involved in the perception of pheromones. The chain is Cyclic nucleotide-gated channel alpha-4 from Rattus norvegicus (Rat).